A 160-amino-acid polypeptide reads, in one-letter code: E3 ubiquitin ligase complex SCF subunit sconC (160 aa).

Residues 101-160 (ILAANYLDIKALLDVGCKTVANMIKGKSPEEIRKTFNIQNDFTPEEEDQIRRENEWAEDR) are interaction with the F-box domain of F-box proteins.

It belongs to the SKP1 family. In terms of assembly, component of the SCF (SKP1-CUL1-F-box protein) E3 ubiquitin ligase complexes.

Its pathway is protein modification; protein ubiquitination. Functionally, essential component of the SCF (SKP1-CUL1-F-box protein) E3 ubiquitin ligase complexes, which mediate the ubiquitination and subsequent proteasomal degradation of target proteins. Controls sulfur metabolite repression, probably by mediating the inactivation or degradation of the metR transcription factor. This chain is E3 ubiquitin ligase complex SCF subunit sconC (sconC), found in Talaromyces stipitatus (strain ATCC 10500 / CBS 375.48 / QM 6759 / NRRL 1006) (Penicillium stipitatum).